The sequence spans 429 residues: MMNFLRRAVSSSKRSELIRIISVATATSGILYASTNPDARTRVSLAIPESVRESLSLLPWQISPGLIHRPEQSLFGNFVFSSRVSPKSEAPINDEKGVSVEASDSSSKPSNGYLGRDTIANAAARIGPAVVNLSVPQGFHGISMGKSIGSGTIIDADGTILTCAHVVVDFQNIRHSSKGRVDVTLQDGRTFEGVVVNADLQSDIALVKIKSKTPLPTAKLGFSSKLRPGDWVIAVGCPLSLQNTVTAGIVSCVDRKSSDLGLGGKHREYLQTDCSINAGNSGGPLVNLDGEVIGVNIMKVLAADGLGFSVPIDSVSKIIEHFKKSGRVIRPWIGLKMVELNNLIVAQLKERDPMFPDVERGVLVPTVIPGSPADRAGFKPGDVVVRFDGKPVIEIMDDRVGKRMQVVVERSNKERVTLEVIPEEANPDM.

Residues 87–113 (KSEAPINDEKGVSVEASDSSSKPSNGY) form a disordered region. Residues 113–338 (YLGRDTIANA…IRPWIGLKMV (226 aa)) are serine protease. Residues H165, D203, and S281 each act as charge relay system in the active site. The PDZ domain maps to 318-424 (IIEHFKKSGR…RVTLEVIPEE (107 aa)).

This sequence belongs to the peptidase S1C family.

Its function is as follows. Putative serine protease. In Arabidopsis thaliana (Mouse-ear cress), this protein is Putative protease Do-like 14 (DEGP14).